Here is a 639-residue protein sequence, read N- to C-terminus: tRNA uridine 5-carboxymethylaminomethyl modification enzyme MnmG (639 aa).

13–18 (GGGHAG) is an FAD binding site. 274–288 (GPRYCPSIEDKIHRF) serves as a coordination point for NAD(+).

The protein belongs to the MnmG family. In terms of assembly, homodimer. Heterotetramer of two MnmE and two MnmG subunits. The cofactor is FAD.

Its subcellular location is the cytoplasm. NAD-binding protein involved in the addition of a carboxymethylaminomethyl (cmnm) group at the wobble position (U34) of certain tRNAs, forming tRNA-cmnm(5)s(2)U34. This chain is tRNA uridine 5-carboxymethylaminomethyl modification enzyme MnmG, found in Polynucleobacter asymbioticus (strain DSM 18221 / CIP 109841 / QLW-P1DMWA-1) (Polynucleobacter necessarius subsp. asymbioticus).